We begin with the raw amino-acid sequence, 88 residues long: Putative carnobacteriocin-BM1 immunity protein (88 aa).

Functionally, could impart immunity to carnobacteriocin-BM1 to naturally sensitive host strains. The sequence is that of Putative carnobacteriocin-BM1 immunity protein from Carnobacterium maltaromaticum (Carnobacterium piscicola).